The primary structure comprises 485 residues: Pelle-like serine/threonine-protein kinase pik-1 (485 aa).

Over residues 115-132 (TSRVSKQMVQPPGSQSAS) the composition is skewed to polar residues. Positions 115 to 155 (TSRVSKQMVQPPGSQSASRLKKTEIKESSPSPAAAAASQLS) are disordered. The span at 142 to 152 (SSPSPAAAAAS) shows a compositional bias: low complexity. The Protein kinase domain occupies 185-485 (FAVSNVIGKG…LCKNSIPPVV (301 aa)). ATP contacts are provided by residues 191–199 (IGKGGYGTV) and K214. D318 acts as the Proton acceptor in catalysis.

This sequence belongs to the protein kinase superfamily. TKL Ser/Thr protein kinase family. Pelle subfamily. As to quaternary structure, interacts with actl-1. As to expression, expressed in the nervous system.

The catalysed reaction is L-seryl-[protein] + ATP = O-phospho-L-seryl-[protein] + ADP + H(+). It carries out the reaction L-threonyl-[protein] + ATP = O-phospho-L-threonyl-[protein] + ADP + H(+). In terms of biological role, through association with the adapter actl-1, may act downstream of the receptor complex composed of ilcr-1 and ilcr-2, which is a signaling complex that modulates neuronal activity and animal behavior in response to sensory neuron input. The polypeptide is Pelle-like serine/threonine-protein kinase pik-1 (Caenorhabditis elegans).